The sequence spans 427 residues: 3-phosphoshikimate 1-carboxyvinyltransferase (427 aa).

The 3-phosphoshikimate site is built by Lys20, Ser21, and Arg25. Residue Lys20 coordinates phosphoenolpyruvate. 2 residues coordinate phosphoenolpyruvate: Gly92 and Arg120. Residues Ser166, Gln168, Asp312, and Lys339 each contribute to the 3-phosphoshikimate site. Gln168 is a phosphoenolpyruvate binding site. Asp312 functions as the Proton acceptor in the catalytic mechanism. Residues Arg343 and Arg385 each contribute to the phosphoenolpyruvate site.

It belongs to the EPSP synthase family. Monomer.

The protein resides in the cytoplasm. It carries out the reaction 3-phosphoshikimate + phosphoenolpyruvate = 5-O-(1-carboxyvinyl)-3-phosphoshikimate + phosphate. It participates in metabolic intermediate biosynthesis; chorismate biosynthesis; chorismate from D-erythrose 4-phosphate and phosphoenolpyruvate: step 6/7. Its function is as follows. Catalyzes the transfer of the enolpyruvyl moiety of phosphoenolpyruvate (PEP) to the 5-hydroxyl of shikimate-3-phosphate (S3P) to produce enolpyruvyl shikimate-3-phosphate and inorganic phosphate. This Streptococcus uberis (strain ATCC BAA-854 / 0140J) protein is 3-phosphoshikimate 1-carboxyvinyltransferase.